We begin with the raw amino-acid sequence, 459 residues long: Taurine--pyruvate aminotransferase (459 aa).

Residue Lys-287 is modified to N6-(pyridoxal phosphate)lysine.

This sequence belongs to the class-III pyridoxal-phosphate-dependent aminotransferase family. Pyridoxal 5'-phosphate is required as a cofactor.

The protein resides in the cytoplasm. It catalyses the reaction taurine + pyruvate = sulfoacetaldehyde + L-alanine. It participates in organosulfur degradation; taurine degradation via aerobic pathway; acetyl phosphate and sulfite from taurine: step 1/2. Catalyzes the degradation of taurine into alanine and sulfoacetaldehyde. This chain is Taurine--pyruvate aminotransferase, found in Rhodobacter capsulatus (strain ATCC BAA-309 / NBRC 16581 / SB1003).